A 63-amino-acid chain; its full sequence is Arabinogalactan protein 41 (63 aa).

An N-terminal signal peptide occupies residues 1–27 (MSGSRLFFGVSTIVSIIFAILLPMAHA). Gln-28 is subject to Pyrrolidone carboxylic acid. 4-hydroxyproline occurs at positions 32, 34, and 36. Residues Pro-32, Pro-34, and Pro-36 are each glycosylated (O-linked (Ara...) hydroxyproline). Ser-38 carries the GPI-anchor amidated serine lipid modification. The propeptide at 39–63 (DGTTIDQGIAYVLMLVALVLTYLIH) is removed in mature form.

The protein belongs to the AG-peptide AGP family. Contains 4-hydroxyproline; hydroxylated on Pro-32, Pro-34 and Pro-36. In terms of processing, O-glycosylated on hydroxyprolines; noncontiguous hydroxylproline residues are glycosylated with arabinogalactan.

Its subcellular location is the cell membrane. Its function is as follows. Proteoglycan that seems to be implicated in diverse developmental roles such as differentiation, cell-cell recognition, embryogenesis and programmed cell death. The sequence is that of Arabinogalactan protein 41 from Arabidopsis thaliana (Mouse-ear cress).